The primary structure comprises 75 residues: Defensin-like protein (75 aa).

The signal sequence occupies residues methionine 1 to valine 24. 4 disulfides stabilise this stretch: cysteine 31-cysteine 75, cysteine 42-cysteine 63, cysteine 48-cysteine 69, and cysteine 52-cysteine 71.

Belongs to the DEFL family.

It localises to the secreted. This protein is required for germination. The polypeptide is Defensin-like protein (Vigna unguiculata (Cowpea)).